A 281-amino-acid chain; its full sequence is ATP phosphoribosyltransferase (281 aa).

It belongs to the ATP phosphoribosyltransferase family. Long subfamily. The cofactor is Mg(2+).

The protein resides in the cytoplasm. It catalyses the reaction 1-(5-phospho-beta-D-ribosyl)-ATP + diphosphate = 5-phospho-alpha-D-ribose 1-diphosphate + ATP. It functions in the pathway amino-acid biosynthesis; L-histidine biosynthesis; L-histidine from 5-phospho-alpha-D-ribose 1-diphosphate: step 1/9. Its activity is regulated as follows. Feedback inhibited by histidine. Its function is as follows. Catalyzes the condensation of ATP and 5-phosphoribose 1-diphosphate to form N'-(5'-phosphoribosyl)-ATP (PR-ATP). Has a crucial role in the pathway because the rate of histidine biosynthesis seems to be controlled primarily by regulation of HisG enzymatic activity. The sequence is that of ATP phosphoribosyltransferase from Corynebacterium efficiens (strain DSM 44549 / YS-314 / AJ 12310 / JCM 11189 / NBRC 100395).